The primary structure comprises 271 residues: Probable iron transport system membrane protein HI_0359 (271 aa).

8 consecutive transmembrane segments (helical) span residues Ala-17 to Leu-37, Ile-55 to Phe-75, Thr-93 to Ile-113, Ser-131 to Phe-151, Val-168 to Ile-188, Val-194 to Leu-214, Met-221 to Tyr-241, and Ala-245 to Tyr-265.

The protein belongs to the ABC-3 integral membrane protein family.

It localises to the cell inner membrane. Part of an ATP-driven transport system HI_0359/HI_0360/HI_0361/HI_0362 for iron. In Haemophilus influenzae (strain ATCC 51907 / DSM 11121 / KW20 / Rd), this protein is Probable iron transport system membrane protein HI_0359.